Reading from the N-terminus, the 284-residue chain is Pantothenate synthetase (284 aa).

Residue 30–37 coordinates ATP; that stretch reads MGNLHEGH. H37 (proton donor) is an active-site residue. Residue Q61 coordinates (R)-pantoate. A beta-alanine-binding site is contributed by Q61. 149–152 serves as a coordination point for ATP; it reads GEKD. Q155 contributes to the (R)-pantoate binding site. ATP-binding positions include V178 and 186–189; that span reads LSSR.

The protein belongs to the pantothenate synthetase family. In terms of assembly, homodimer.

The protein resides in the cytoplasm. It carries out the reaction (R)-pantoate + beta-alanine + ATP = (R)-pantothenate + AMP + diphosphate + H(+). The protein operates within cofactor biosynthesis; (R)-pantothenate biosynthesis; (R)-pantothenate from (R)-pantoate and beta-alanine: step 1/1. Catalyzes the condensation of pantoate with beta-alanine in an ATP-dependent reaction via a pantoyl-adenylate intermediate. This is Pantothenate synthetase from Sodalis glossinidius (strain morsitans).